The primary structure comprises 391 residues: Processive diacylglycerol beta-glucosyltransferase (391 aa).

Belongs to the glycosyltransferase 28 family. UgtP subfamily.

The protein resides in the cell membrane. It catalyses the reaction a 1,2-diacyl-3-O-(beta-D-glucopyranosyl)-sn-glycerol + UDP-alpha-D-glucose = a 1,2-diacyl-3-O-(beta-D-Glc-(1-&gt;6)-beta-D-Glc)-sn-glycerol + UDP + H(+). The catalysed reaction is a 1,2-diacyl-sn-glycerol + UDP-alpha-D-glucose = a 1,2-diacyl-3-O-(beta-D-glucopyranosyl)-sn-glycerol + UDP + H(+). Its pathway is glycolipid metabolism; diglucosyl-diacylglycerol biosynthesis. Functionally, processive glucosyltransferase involved in the biosynthesis of both the bilayer- and non-bilayer-forming membrane glucolipids. Is able to successively transfer two glucosyl residues to diacylglycerol (DAG), thereby catalyzing the formation of beta-monoglucosyl-DAG (3-O-(beta-D-glucopyranosyl)-1,2-diacyl-sn-glycerol) and beta-diglucosyl-DAG (3-O-(beta-D-glucopyranosyl-beta-(1-&gt;6)-D-glucopyranosyl)-1,2-diacyl-sn-glycerol). Beta-diglucosyl-DAG is the predominant glycolipid found in Bacillales and is also used as a membrane anchor for lipoteichoic acid (LTA). The polypeptide is Processive diacylglycerol beta-glucosyltransferase (Staphylococcus saprophyticus subsp. saprophyticus (strain ATCC 15305 / DSM 20229 / NCIMB 8711 / NCTC 7292 / S-41)).